A 571-amino-acid chain; its full sequence is Proline--tRNA ligase (571 aa).

It belongs to the class-II aminoacyl-tRNA synthetase family. ProS type 1 subfamily. Homodimer.

The protein localises to the cytoplasm. It carries out the reaction tRNA(Pro) + L-proline + ATP = L-prolyl-tRNA(Pro) + AMP + diphosphate. In terms of biological role, catalyzes the attachment of proline to tRNA(Pro) in a two-step reaction: proline is first activated by ATP to form Pro-AMP and then transferred to the acceptor end of tRNA(Pro). As ProRS can inadvertently accommodate and process non-cognate amino acids such as alanine and cysteine, to avoid such errors it has two additional distinct editing activities against alanine. One activity is designated as 'pretransfer' editing and involves the tRNA(Pro)-independent hydrolysis of activated Ala-AMP. The other activity is designated 'posttransfer' editing and involves deacylation of mischarged Ala-tRNA(Pro). The misacylated Cys-tRNA(Pro) is not edited by ProRS. This is Proline--tRNA ligase from Ligilactobacillus salivarius (strain UCC118) (Lactobacillus salivarius).